The primary structure comprises 468 residues: Acyltransferase R4 (468 aa).

7 consecutive transmembrane segments (helical) span residues 21 to 41 (GILSIIIFNAHLTPIIILGYD), 70 to 90 (LFTIPIVKLVYSASPAVCLFF), 133 to 153 (LNLLAMASMIVPFVLVKTGFF), 252 to 272 (FLAALVVMGIAVGSLECPLFW), 308 to 328 (DPFGKAVVLAIGCYFASYPTW), 388 to 408 (FAVYLVHFCLVISFGPGLFSW), and 423 to 443 (IGFGIAYAVLFIGVLLAAAMF).

It belongs to the acyltransferase 3 family.

It localises to the membrane. It participates in secondary metabolite biosynthesis. Functionally, acyltransferase; part of the gene cluster that mediates the biosynthesis of squalestatin S1 (SQS1, also known as zaragozic acid A), a heavily oxidized fungal polyketide that offers potent cholesterol lowering activity by targeting squalene synthase (SS). SQS1 is composed of a 2,8-dioxobicyclic[3.2.1]octane-3,4,5-tricarboxyclic acid core that is connected to two lipophilic polyketide arms. These initial steps feature the priming of an unusual benzoic acid starter unit onto the highly reducing polyketide synthase pks2, followed by oxaloacetate extension and product release to generate a tricarboxylic acid containing product. The phenylalanine ammonia lyase (PAL) M7 and the acyl-CoA ligase M9 are involved in transforming phenylalanine into benzoyl-CoA. The citrate synthase-like protein R3 is involved in connecting the C-alpha-carbons of the hexaketide chain and oxaloacetate to afford the tricarboxylic acid unit. The potential hydrolytic enzymes, M8 and M10, are in close proximity to pks2 and may participate in product release. On the other side, the tetraketide arm is synthesized by a the squalestatin tetraketide synthase pks1 and enzymatically esterified to the core in the last biosynthetic step, by the acetyltransferase M4. The biosynthesis of the tetraketide must involve 3 rounds of chain extension. After the first and second rounds methyl-transfer occurs, and in all rounds of extension the ketoreductase and dehydratase are active. The enoyl reductase and C-MeT of pks1 are not active in the final round of extension. The acetyltransferase M4 appears to have a broad substrate selectivity for its acyl CoA substrate, allowing the in vitro synthesis of novel squalestatins. The biosynthesis of SQS1 requires several oxidative steps likely performed by oxidoreductases M1, R1 and R2. Finally, in support of the identification of the cluster as being responsible for SQS1 production, the cluster contains a gene encoding a putative squalene synthase (SS) R6, suggesting a likely mechanism for self-resistance. The sequence is that of Acyltransferase R4 from Phoma sp. (strain ATCC 20986 / MF5453).